A 443-amino-acid chain; its full sequence is MAKFEDKVDLYDDRGNLVEEQVPLEALSPLRNPAIKSIVQGIKRTVAVNLEGIENALKTAKVGGPACKIMGRELDLDIVGNAESIAAAAKEMIQVTEDDDTNVELLGGGKRALVQVPSARFDVAAEYSAAPLVTATAFVQAIINEFDVSMYDANMVKAAVLGRYPQSVEYMGANIATMLDIPQKLEGPGYALRNIMVNHVVAATLKNTLQAAALSTILEQTAMFEMGDAVGAFERMHLLGLAYQGMNADNLVFDLVKANGKEGTVGSVIADLVERALEDGVIKVEKELTDYKVYGTDDLAMWNAYAAAGLMAATMVNQGAARAAQGVSSTLLYYNDLIEFETGLPSVDFGKVEGTAVGFSFFSHSIYGGGGPGIFNGNHIVTRHSKGFAIPCVAAAMALDAGTQMFSPEATSGLIKEVFSQVDEFREPLKYVVEAAAEIKNEI.

Residue Tyr367 participates in coenzyme M binding. Gly369 serves as a coordination point for coenzyme B.

Belongs to the methyl-coenzyme M reductase beta subunit family. As to quaternary structure, MCR is a hexamer of two alpha, two beta, and two gamma chains, forming a dimer of heterotrimers. It depends on coenzyme F430 as a cofactor.

It is found in the cytoplasm. The enzyme catalyses coenzyme B + methyl-coenzyme M = methane + coenzyme M-coenzyme B heterodisulfide. It participates in one-carbon metabolism; methyl-coenzyme M reduction; methane from methyl-coenzyme M: step 1/1. Its activity is regulated as follows. Methyl-coenzyme M reductase activity is inhibited by 3-nitrooxypropanol (3-NOP) in vitro and in vivo, by oxidation of its active site Ni(I), which stops both growth and methanogenesis. Is also inhibited by the reaction product CoM-S-S-CoB. In terms of biological role, component of the methyl-coenzyme M reductase (MCR) I that catalyzes the reductive cleavage of methyl-coenzyme M (CoM-S-CH3 or 2-(methylthio)ethanesulfonate) using coenzyme B (CoB or 7-mercaptoheptanoylthreonine phosphate) as reductant which results in the production of methane and the mixed heterodisulfide of CoB and CoM (CoM-S-S-CoB). This is the final step in methanogenesis. Neither N-6-mercaptohexanoylthreonine phosphate (H-S-HxoTP) nor N-8-mercaptooctanoylthreonine phosphate (H-SOcoTP) nor any other thiol compound such as CoA or CoM can substitute for CoB as the electron donor. This chain is Methyl-coenzyme M reductase I subunit beta (mcrB), found in Methanothermobacter marburgensis (strain ATCC BAA-927 / DSM 2133 / JCM 14651 / NBRC 100331 / OCM 82 / Marburg) (Methanobacterium thermoautotrophicum).